The sequence spans 597 residues: Kelch-like protein 21 (597 aa).

The BTB domain maps to 35-103 (LDVTLEAAGG…SYTGRVAVSG (69 aa)). A BACK domain is found at 138 to 239 (CLDMQDFAEA…RRFYLLAHVE (102 aa)). Kelch repeat units follow at residues 287 to 335 (ILVL…ALGN), 336 to 382 (DIYV…VLDG), 384 to 422 (LYVV…ACRG), 424 to 463 (LYAI…SFAP), 464 to 512 (KTVT…VLGG), and 513 to 560 (KLYV…SIFR). Positions 570–597 (GRGFELDGGSSDMDVGQPRPPQNPAELH) are disordered. Residues 587 to 597 (PRPPQNPAELH) show a composition bias toward pro residues.

In terms of assembly, component of the BCR(KLHL21) E3 ubiquitin ligase complex, at least composed of CUL3, KLHL21 and RBX1.

It localises to the cytoplasm. The protein resides in the cytoskeleton. Its subcellular location is the spindle. The protein operates within protein modification; protein ubiquitination. In terms of biological role, substrate-specific adapter of a BCR (BTB-CUL3-RBX1) E3 ubiquitin-protein ligase complex required for efficient chromosome alignment and cytokinesis. The BCR(KLHL21) E3 ubiquitin ligase complex regulates localization of the chromosomal passenger complex (CPC) from chromosomes to the spindle midzone in anaphase and mediates the ubiquitination of AURKB. Ubiquitination of AURKB by BCR(KLHL21) E3 ubiquitin ligase complex may not lead to its degradation by the proteasome. The chain is Kelch-like protein 21 (KLHL21) from Bos taurus (Bovine).